A 426-amino-acid chain; its full sequence is MVIKKPRGTYDLFGEEIEVFNKINDVLKTISNTYNCHEIKTPIFEHKELYIRNIGESSDIVTKEFYDFKDKSDRELALRPENTVGVIRSVVENKLLYTNPFPLKFYYLGPMFRYERPQSGRNRQFYQFGIEFIGVKNILNEIEGILFALDILKKLNITNWKLKVNYIGSIETREKWINSLKKYFNKYKDELSEDSKNRIEKNPLRILDDKVDGSKSFVKSCPKIEEFLTKEEKEESDNFIKCLKTIVNEFEFDSTLVRGLDYYSGPVFEIVSQSNKLTGQSTIIGGGRYTKLTKELGDNDYICFGFALGMERLMLAYRDENQFLSNNSVDVYIASIGSVESELVAMNFANQLRNLNYRVEVNFDLKKIDKQFKNSNKYNPKIILIYGDEDHKNKQVTLKNQKTLENKVIKLNELNNKIKEFFESDK.

This sequence belongs to the class-II aminoacyl-tRNA synthetase family. In terms of assembly, homodimer.

Its subcellular location is the cytoplasm. The enzyme catalyses tRNA(His) + L-histidine + ATP = L-histidyl-tRNA(His) + AMP + diphosphate + H(+). The polypeptide is Histidine--tRNA ligase (Malacoplasma penetrans (strain HF-2) (Mycoplasma penetrans)).